Here is a 348-residue protein sequence, read N- to C-terminus: Trans-L-3-hydroxyproline dehydratase (348 aa).

The Proton acceptor role is filled by cysteine 101. Residues 102 to 103 (GH), aspartate 263, and 268 to 269 (GS) contribute to the substrate site.

The protein belongs to the proline racemase family. In terms of assembly, homodimer.

The catalysed reaction is trans-3-hydroxy-L-proline = 1-pyrroline-2-carboxylate + H2O. In terms of biological role, catalyzes the dehydration of trans-3-hydroxy-L-proline to delta-1-pyrroline-2-carboxylate (Pyr2C). The polypeptide is Trans-L-3-hydroxyproline dehydratase (l3hypdh) (Xenopus tropicalis (Western clawed frog)).